An 837-amino-acid polypeptide reads, in one-letter code: Protein ROD1 (837 aa).

Residues Ser-138 and Ser-141 each carry the phosphoserine modification. Lys-401 participates in a covalent cross-link: Glycyl lysine isopeptide (Lys-Gly) (interchain with G-Cter in ubiquitin). Ser-436 carries the post-translational modification Phosphoserine. Residues 487–490 (PPNY) carry the PY-motif motif. Ser-536 carries the phosphoserine modification. The short motif at 656–659 (PPAY) is the PY-motif element. 2 disordered regions span residues 675 to 726 (ERPQ…SVSL) and 763 to 837 (SFTS…RDRS). The span at 685–703 (TSSLLPLPGSSKSSNNLKR) shows a compositional bias: low complexity. Residues 716–726 (PRNNSGSSVSL) show a composition bias toward polar residues. Ser-720 and Ser-725 each carry phosphoserine. Residues 763–773 (SFTSNSSSKNN) are compositionally biased toward low complexity. Basic and acidic residues predominate over residues 774–792 (SHFDKTDSTSDANKPREEE). The span at 805–815 (SSSVRSNNSNS) shows a compositional bias: low complexity.

Belongs to the arrestin family. In terms of assembly, interacts with RSP5 via its 2 PY-motifs.

It localises to the membrane. Its function is as follows. Mediates resistance to o-dinitrobenzene, calcium and zinc. In Saccharomyces cerevisiae (strain ATCC 204508 / S288c) (Baker's yeast), this protein is Protein ROD1 (ROD1).